A 92-amino-acid chain; its full sequence is Islet amyloid polypeptide (92 aa).

The first 22 residues, 1 to 22 (MHISKLPAALLIFSVALNHLKA), serve as a signal peptide directing secretion. A propeptide spanning residues 23 to 34 (TPVRSGTNHQMD) is cleaved from the precursor. An intrachain disulfide couples Cys-38 to Cys-43. At Tyr-73 the chain carries Tyrosine amide. Positions 77 to 92 (SAAEIPDGDSLDLFLL) are excised as a propeptide.

The protein belongs to the calcitonin family. In terms of assembly, can form homodimers. Interacts with IDE and INS. Interaction with INS inhibits homodimerization and fibril formation.

It is found in the secreted. Amylin/IAPP is a glucoregulatory peptide hormone that plays an important role in the regulation of energy homeostasis. Selectively inhibits insulin-stimulated glucose utilization and glycogen deposition in muscle, while not affecting adipocyte glucose metabolism. IAPP function is mediated by the CALCR-RAMPs (AMYRs) receptor complexes. Amylin can also bind CALCR receptor in the absence of RAMPs, although it is more selective for AMYRs. The protein is Islet amyloid polypeptide (IAPP) of Mesocricetus auratus (Golden hamster).